Reading from the N-terminus, the 103-residue chain is UPF0145 protein CYA_2258 (103 aa).

The protein belongs to the UPF0145 family.

The sequence is that of UPF0145 protein CYA_2258 from Synechococcus sp. (strain JA-3-3Ab) (Cyanobacteria bacterium Yellowstone A-Prime).